A 98-amino-acid polypeptide reads, in one-letter code: NADH-ubiquinone oxidoreductase chain 4L (98 aa).

3 helical membrane-spanning segments follow: residues 1-21, 29-49, and 61-81; these read MSMV…GLLM, SLLC…VTIL, and IILL…LVMV.

This sequence belongs to the complex I subunit 4L family. In terms of assembly, core subunit of respiratory chain NADH dehydrogenase (Complex I) which is composed of 45 different subunits.

It is found in the mitochondrion inner membrane. It carries out the reaction a ubiquinone + NADH + 5 H(+)(in) = a ubiquinol + NAD(+) + 4 H(+)(out). Functionally, core subunit of the mitochondrial membrane respiratory chain NADH dehydrogenase (Complex I) which catalyzes electron transfer from NADH through the respiratory chain, using ubiquinone as an electron acceptor. Part of the enzyme membrane arm which is embedded in the lipid bilayer and involved in proton translocation. This Erignathus barbatus (Bearded seal) protein is NADH-ubiquinone oxidoreductase chain 4L (MT-ND4L).